The sequence spans 190 residues: Crossover junction endodeoxyribonuclease RuvC (190 aa).

Active-site residues include Asp-8, Glu-67, and Asp-139. Residues Asp-8, Glu-67, and Asp-139 each contribute to the Mg(2+) site.

This sequence belongs to the RuvC family. In terms of assembly, homodimer which binds Holliday junction (HJ) DNA. The HJ becomes 2-fold symmetrical on binding to RuvC with unstacked arms; it has a different conformation from HJ DNA in complex with RuvA. In the full resolvosome a probable DNA-RuvA(4)-RuvB(12)-RuvC(2) complex forms which resolves the HJ. It depends on Mg(2+) as a cofactor.

It localises to the cytoplasm. The catalysed reaction is Endonucleolytic cleavage at a junction such as a reciprocal single-stranded crossover between two homologous DNA duplexes (Holliday junction).. Functionally, the RuvA-RuvB-RuvC complex processes Holliday junction (HJ) DNA during genetic recombination and DNA repair. Endonuclease that resolves HJ intermediates. Cleaves cruciform DNA by making single-stranded nicks across the HJ at symmetrical positions within the homologous arms, yielding a 5'-phosphate and a 3'-hydroxyl group; requires a central core of homology in the junction. The consensus cleavage sequence is 5'-(A/T)TT(C/G)-3'. Cleavage occurs on the 3'-side of the TT dinucleotide at the point of strand exchange. HJ branch migration catalyzed by RuvA-RuvB allows RuvC to scan DNA until it finds its consensus sequence, where it cleaves and resolves the cruciform DNA. The chain is Crossover junction endodeoxyribonuclease RuvC from Pasteurella multocida (strain Pm70).